The sequence spans 403 residues: D-mannonate dehydratase Caul1427 (403 aa).

Positions 38 and 123 each coordinate substrate. Y160 serves as the catalytic Proton donor/acceptor. D211 contributes to the Mg(2+) binding site. The active-site Proton donor/acceptor is H213. The Mg(2+) site is built by E237 and E263. Residues E263, R284, H313, D317, and E340 each coordinate substrate.

The protein belongs to the mandelate racemase/muconate lactonizing enzyme family. GalD subfamily. Mg(2+) serves as cofactor.

The catalysed reaction is D-mannonate = 2-dehydro-3-deoxy-D-gluconate + H2O. It participates in carbohydrate metabolism; pentose and glucuronate interconversion. Its function is as follows. Catalyzes the dehydration of D-mannonate. Has no detectable activity with a panel of 70 other acid sugars (in vitro). In Caulobacter sp. (strain K31), this protein is D-mannonate dehydratase Caul1427.